The following is a 365-amino-acid chain: 2-aminoethylphosphonate--pyruvate transaminase (365 aa).

Lysine 194 is subject to N6-(pyridoxal phosphate)lysine.

Belongs to the class-V pyridoxal-phosphate-dependent aminotransferase family. PhnW subfamily. As to quaternary structure, homodimer. Requires pyridoxal 5'-phosphate as cofactor.

It catalyses the reaction (2-aminoethyl)phosphonate + pyruvate = phosphonoacetaldehyde + L-alanine. Involved in phosphonate degradation. The polypeptide is 2-aminoethylphosphonate--pyruvate transaminase (Bacillus thuringiensis (strain Al Hakam)).